The chain runs to 418 residues: Actin-related protein 3-A (418 aa).

This sequence belongs to the actin family. ARP3 subfamily. In terms of assembly, component of the Arp2/3 complex composed of actr2/arp2, actr3/arp3, arpc1 (arpc1a or arpc1b), arpc2, arpc3, arpc4 and arpc5.

Its subcellular location is the cytoplasm. The protein localises to the cytoskeleton. The protein resides in the cell projection. It is found in the nucleus. ATP-binding component of the Arp2/3 complex, a multiprotein complex that mediates actin polymerization upon stimulation by nucleation-promoting factor (NPF). The Arp2/3 complex mediates the formation of branched actin networks in the cytoplasm, providing the force for cell motility. Seems to contact the pointed end of the daughter actin filament. In addition to its role in the cytoplasmic cytoskeleton, the Arp2/3 complex also promotes actin polymerization in the nucleus, thereby regulating gene transcription and repair of damaged DNA. The Arp2/3 complex promotes homologous recombination (HR) repair in response to DNA damage by promoting nuclear actin polymerization, leading to drive motility of double-strand breaks (DSBs). This Xenopus laevis (African clawed frog) protein is Actin-related protein 3-A.